We begin with the raw amino-acid sequence, 378 residues long: MRKTEKMKRPHNSSHVKQEERADDSHSNSPASSKSIKQENLLKCELCSTVCSSISQLQSHTLSEHVPEKKPSISTSNSAPSTKRVACQQCEDTFEDFAQFAIHMKSHLSSVTSQLFFCPICPVGTPFRDKKSQLEHLTTQHLQIQVTQHICSICDSAFPSPQAQSVHFAEAHKKYSCTNCDFETENEKTFKEHSKQHSRQLIMYGCALCATSYPSQLHLITHVQMSHDQETFYPPSLPIPTPPSPKSTPKQRVLQCSVCDESVLGEDGLDEHRLRKHCKVRFADKCADCQEPLLNETSFVEHCLRHSKDHAHHCPVCRQSLRSDSQIHAHCAYHMSHQDSTSSTSSSPITNGFSFVCPICGEKLDDGFALIEHTKIHL.

Over residues 1-14 the composition is skewed to basic residues; that stretch reads MRKTEKMKRPHNSS. Disordered regions lie at residues 1 to 36 and 61 to 80; these read MRKT…SKSI and TLSE…NSAP. 2 stretches are compositionally biased toward basic and acidic residues: residues 16–26 and 62–71; these read VKQEERADDSH and LSEHVPEKKP. A C2H2-type 1 zinc finger spans residues 42 to 65; that stretch reads LKCELCSTVCSSISQLQSHTLSEH. A C2H2-type 2; degenerate zinc finger spans residues 85–107; that stretch reads VACQQCEDTFEDFAQFAIHMKSH. The segment at 204–226 adopts a C2H2-type 3; degenerate zinc-finger fold; the sequence is YGCALCATSYPSQLHLITHVQMS. The segment at 231 to 250 is disordered; that stretch reads TFYPPSLPIPTPPSPKSTPK. Over residues 235 to 246 the composition is skewed to pro residues; sequence PSLPIPTPPSPK. C2H2-type zinc fingers lie at residues 254–277, 284–306, 312–334, and 355–377; these read LQCS…LRKH, DKCA…CLRH, HHCP…CAYH, and FVCP…TKIH.

The protein resides in the nucleus. This Caenorhabditis elegans protein is Putative zinc finger protein C09F5.3.